The following is a 133-amino-acid chain: Holo-[acyl-carrier-protein] synthase (133 aa).

Mg(2+)-binding residues include Asp-8 and Glu-57.

This sequence belongs to the P-Pant transferase superfamily. AcpS family. The cofactor is Mg(2+).

It localises to the cytoplasm. It carries out the reaction apo-[ACP] + CoA = holo-[ACP] + adenosine 3',5'-bisphosphate + H(+). Functionally, transfers the 4'-phosphopantetheine moiety from coenzyme A to a Ser of acyl-carrier-protein. In Parvibaculum lavamentivorans (strain DS-1 / DSM 13023 / NCIMB 13966), this protein is Holo-[acyl-carrier-protein] synthase.